A 60-amino-acid polypeptide reads, in one-letter code: Pepsin-3 (60 aa).

A propeptide spans 1 to 35 (INVPLTRHKSMRESLREKGIELPYQDPAIKYRPEF) (activation peptide).

The protein belongs to the peptidase A1 family.

This is Pepsin-3 from Thunnus orientalis (North Pacific bluefin tuna).